Reading from the N-terminus, the 86-residue chain is Serine protease inhibitor Kazal-type 2 (86 aa).

The first 16 residues, 1–16 (MLRLVLLLLVTDFAAS), serve as a signal peptide directing secretion. Residues 32–86 (QFRTPDCGHFDFPACPRNLNPVCGTDMNTYSNECTLCMKIREDGSHINIIKDEPC) enclose the Kazal-like domain. 3 cysteine pairs are disulfide-bonded: C38-C68, C46-C65, and C54-C86.

As to expression, expressed in sperm (at protein level). Expressed in testis but not in ovary, brain, heart, kidney or lung. Within testis, expressed in epididymis and germ cells.

The protein resides in the secreted. It localises to the cytoplasmic vesicle. It is found in the secretory vesicle. Its subcellular location is the acrosome. In terms of biological role, as a strong inhibitor of acrosin, it is required for normal spermiogenesis. It probably hinders premature activation of proacrosin and other proteases, thus preventing the cascade of events leading to spermiogenesis defects. May be involved in the regulation of serine protease-dependent germ cell apoptosis. It also inhibits trypsin. The protein is Serine protease inhibitor Kazal-type 2 (Spink2) of Mus musculus (Mouse).